The following is a 304-amino-acid chain: MTKVRKAIIPAAGLGTRFLPATKALAKEMLPIVDKPTIQFIVEEALKSGIEEILVVTGKAKRSIEDHFDSNFELEYNLQAKGKNELLKLVDETTAINLHFIRQSHPRGLGDAVLQAKAFVGNEPFVVMLGDDLMDITNASAKPLTKQLMEDYDKTHASTIAVMKVPHEDVSSYGVIAPQGKAVKGLYSVDTFVEKPQPEDAPSDLAIIGRYLLTPEIFGILERQTPGAGNEVQLTDAIDTLNKTQRVFAREFKGNRYDVGDKFGFMKTSIDYALEHPQVKEDLKNYIIKLGKALEKSKVPTHSK.

The protein belongs to the UDPGP type 2 family.

It catalyses the reaction alpha-D-glucose 1-phosphate + UTP + H(+) = UDP-alpha-D-glucose + diphosphate. Its pathway is carbohydrate metabolism; nucleotide-sugar metabolism. This chain is UTP--glucose-1-phosphate uridylyltransferase 1 (hasC1), found in Streptococcus pyogenes serotype M1.